The following is a 2225-amino-acid chain: Multifunctional protein pyr1-3 (2225 aa).

Met1 bears the N-acetylmethionine mark. Residues 40 to 390 (MVGYNESISD…NVCGEQQHKS (351 aa)) are GATase (Glutamine amidotransferase). L-glutamine is bound by residues Ser51, Gly245, and Gly247. The 193-residue stretch at 196-388 (KVIVLDCGIK…VDNVCGEQQH (193 aa)) folds into the Glutamine amidotransferase type-1 domain. The active-site Nucleophile; for GATase activity is Cys275. L-glutamine contacts are provided by Gln279, Asn317, Gly319, and Phe320. Active-site for GATase activity residues include His361 and Glu363. Residues 391-405 (PMNKSKIIDCPKGIN) form a linker region. The segment at 406–948 (KVLILGSGGL…TNDVNINEKS (543 aa)) is CPSase A. The CPSase (Carbamoyl-phosphate synthase) stretch occupies residues 406–1461 (KVLILGSGGL…MKGPMPIENV (1056 aa)). The ATP site is built by Arg526, Arg566, Gly572, Gly573, Lys603, Glu610, Gly636, Ile637, His638, Gln679, and Glu693. 2 consecutive ATP-grasp domains span residues 530–722 (AEKL…KVAL) and 1069–1260 (SRLL…KIII). Mg(2+) contacts are provided by Gln679, Glu693, and Asn695. Mn(2+)-binding residues include Gln679, Glu693, and Asn695. The interval 949-1461 (YITLGSGSYR…MKGPMPIENV (513 aa)) is CPSase B. Residues Arg1105, Lys1144, Ile1146, Glu1151, Gly1176, Val1177, His1178, Ser1179, Gln1219, and Glu1231 each coordinate ATP. Mg(2+) is bound by residues Gln1219, Glu1231, and Asn1233. Mn(2+) contacts are provided by Gln1219, Glu1231, and Asn1233. The MGS-like domain occupies 1324–1470 (FKAPEKNVLL…VDWRTSNKII (147 aa)). The tract at residues 1463-1797 (WRTSNKIIRL…VRGKVVKVVL (335 aa)) is DHOase (dihydroorotase). The Zn(2+) site is built by His1479 and His1481. Arg1483 and Asn1513 together coordinate (S)-dihydroorotate. Zn(2+) contacts are provided by Lys1564, His1599, Cys1622, His1623, and Glu1646. An N6-carboxylysine modification is found at Lys1564. A (S)-dihydroorotate-binding site is contributed by Arg1670. Asp1695 is a Zn(2+) binding site. The active-site For DHOase activity is the Asp1695. Residues His1699 and Pro1711 each contribute to the (S)-dihydroorotate site. Residues 1798–1916 (RGQIAFIDGK…DTLQTAFNIS (119 aa)) are linker. Residues 1917–2225 (DNSLAGKHIF…LLALVFGAGV (309 aa)) form an ATCase (Aspartate transcarbamylase) region. 2 residues coordinate carbamoyl phosphate: Arg1974 and Thr1975. Lys2002 contributes to the L-aspartate binding site. 3 residues coordinate carbamoyl phosphate: Arg2023, His2051, and Gln2054. 2 residues coordinate L-aspartate: Arg2084 and Arg2145. Carbamoyl phosphate is bound by residues Leu2184 and Pro2185.

It in the N-terminal section; belongs to the CarA family. This sequence in the 2nd section; belongs to the CarB family. The protein in the 3rd section; belongs to the metallo-dependent hydrolases superfamily. DHOase family. CAD subfamily. In the C-terminal section; belongs to the aspartate/ornithine carbamoyltransferase superfamily. ATCase family. As to quaternary structure, homohexamer. Requires Mg(2+) as cofactor. The cofactor is Mn(2+). It depends on Zn(2+) as a cofactor.

It localises to the cytoplasm. The enzyme catalyses hydrogencarbonate + L-glutamine + 2 ATP + H2O = carbamoyl phosphate + L-glutamate + 2 ADP + phosphate + 2 H(+). It catalyses the reaction L-glutamine + H2O = L-glutamate + NH4(+). The catalysed reaction is hydrogencarbonate + NH4(+) + 2 ATP = carbamoyl phosphate + 2 ADP + phosphate + 2 H(+). It carries out the reaction carbamoyl phosphate + L-aspartate = N-carbamoyl-L-aspartate + phosphate + H(+). The enzyme catalyses (S)-dihydroorotate + H2O = N-carbamoyl-L-aspartate + H(+). It functions in the pathway pyrimidine metabolism; UMP biosynthesis via de novo pathway; (S)-dihydroorotate from bicarbonate: step 1/3. Its pathway is pyrimidine metabolism; UMP biosynthesis via de novo pathway; (S)-dihydroorotate from bicarbonate: step 2/3. It participates in pyrimidine metabolism; UMP biosynthesis via de novo pathway; (S)-dihydroorotate from bicarbonate: step 3/3. With respect to regulation, allosterically regulated and controlled by phosphorylation. 5-phosphoribose 1-diphosphate is an activator while UMP is an inhibitor of the CPSase reaction. Its function is as follows. Multifunctional protein that encodes the first 3 enzymatic activities of the de novo pyrimidine pathway: carbamoylphosphate synthetase (CPSase; EC 6.3.5.5), aspartate transcarbamylase (ATCase; EC 2.1.3.2) and dihydroorotase (DHOase; EC 3.5.2.3). The CPSase-function is accomplished in 2 steps, by a glutamine-dependent amidotransferase activity (GATase) that binds and cleaves glutamine to produce ammonia, followed by an ammonium-dependent carbamoyl phosphate synthetase, which reacts with the ammonia, hydrogencarbonate and ATP to form carbamoyl phosphate. The endogenously produced carbamoyl phosphate is sequestered and channeled to the ATCase active site. ATCase then catalyzes the formation of carbamoyl-L-aspartate from L-aspartate and carbamoyl phosphate. In the last step, DHOase catalyzes the cyclization of carbamoyl aspartate to dihydroorotate. In Dictyostelium discoideum (Social amoeba), this protein is Multifunctional protein pyr1-3 (pyr1-3).